The following is a 1465-amino-acid chain: DNA polymerase III PolC-type (1465 aa).

Residues 425 to 581 (YVVFDVETTG…YDAEATGRLL (157 aa)) enclose the Exonuclease domain.

The protein belongs to the DNA polymerase type-C family. PolC subfamily.

Its subcellular location is the cytoplasm. The catalysed reaction is DNA(n) + a 2'-deoxyribonucleoside 5'-triphosphate = DNA(n+1) + diphosphate. Required for replicative DNA synthesis. This DNA polymerase also exhibits 3' to 5' exonuclease activity. The chain is DNA polymerase III PolC-type from Streptococcus mutans serotype c (strain ATCC 700610 / UA159).